The sequence spans 277 residues: Undecaprenyl-diphosphatase (277 aa).

A run of 6 helical transmembrane segments spans residues 47–67 (FNII…RGKI), 85–105 (ANLL…ADLI), 108–128 (WLFN…VMLW), 183–203 (AATE…AVYS), 218–238 (VFAV…RALL), and 249–269 (FAWY…FHLI).

It belongs to the UppP family.

It is found in the cell inner membrane. The enzyme catalyses di-trans,octa-cis-undecaprenyl diphosphate + H2O = di-trans,octa-cis-undecaprenyl phosphate + phosphate + H(+). Catalyzes the dephosphorylation of undecaprenyl diphosphate (UPP). Confers resistance to bacitracin. This chain is Undecaprenyl-diphosphatase, found in Pseudomonas aeruginosa (strain UCBPP-PA14).